Consider the following 304-residue polypeptide: GTPase Era (304 aa).

One can recognise an Era-type G domain in the interval 11-179; that stretch reads YCGFIAIVGR…QKIVRKSLRE (169 aa). Positions 19–26 are G1; it reads GRPNVGKS. Residue 19 to 26 coordinates GTP; sequence GRPNVGKS. The segment at 45 to 49 is G2; the sequence is QTTRH. The tract at residues 66-69 is G3; that stretch reads DTPG. GTP contacts are provided by residues 66–70 and 128–131; these read DTPGL and NKVD. The tract at residues 128-131 is G4; that stretch reads NKVD. The interval 158 to 160 is G5; that stretch reads ISA. Positions 210–287 constitute a KH type-2 domain; the sequence is TGEELPYSVT…HLELWVKVKA (78 aa).

This sequence belongs to the TRAFAC class TrmE-Era-EngA-EngB-Septin-like GTPase superfamily. Era GTPase family. As to quaternary structure, monomer.

It is found in the cytoplasm. The protein resides in the cell inner membrane. Functionally, an essential GTPase that binds both GDP and GTP, with rapid nucleotide exchange. Plays a role in 16S rRNA processing and 30S ribosomal subunit biogenesis and possibly also in cell cycle regulation and energy metabolism. The chain is GTPase Era from Actinobacillus pleuropneumoniae serotype 5b (strain L20).